The primary structure comprises 377 residues: Beta sliding clamp (377 aa).

The protein belongs to the beta sliding clamp family. As to quaternary structure, forms a ring-shaped head-to-tail homodimer around DNA which binds and tethers DNA polymerases and other proteins to the DNA. The DNA replisome complex has a single clamp-loading complex (3 tau and 1 each of delta, delta', psi and chi subunits) which binds 3 Pol III cores (1 core on the leading strand and 2 on the lagging strand) each with a beta sliding clamp dimer. Additional proteins in the replisome are other copies of gamma, psi and chi, Ssb, DNA helicase and RNA primase.

The protein localises to the cytoplasm. Its function is as follows. Confers DNA tethering and processivity to DNA polymerases and other proteins. Acts as a clamp, forming a ring around DNA (a reaction catalyzed by the clamp-loading complex) which diffuses in an ATP-independent manner freely and bidirectionally along dsDNA. Initially characterized for its ability to contact the catalytic subunit of DNA polymerase III (Pol III), a complex, multichain enzyme responsible for most of the replicative synthesis in bacteria; Pol III exhibits 3'-5' exonuclease proofreading activity. The beta chain is required for initiation of replication as well as for processivity of DNA replication. In Staphylococcus epidermidis (strain ATCC 35984 / DSM 28319 / BCRC 17069 / CCUG 31568 / BM 3577 / RP62A), this protein is Beta sliding clamp (dnaN).